Reading from the N-terminus, the 391-residue chain is GTPase Obg (391 aa).

Positions 1–159 (MKFIDEALIR…RDLQLELMLL (159 aa)) constitute an Obg domain. One can recognise an OBG-type G domain in the interval 160 to 333 (ADVGMLGLPN…LTRDIMDFIE (174 aa)). Residues 166 to 173 (GLPNAGKS), 191 to 195 (FTTLV), 213 to 216 (DIPG), 283 to 286 (NKID), and 314 to 316 (SAA) contribute to the GTP site. Mg(2+) is bound by residues S173 and T193. The segment at 361 to 391 (QNPITEDDWDDLDDDGWTEEDDEGVEFIYKP) is disordered. Positions 365–385 (TEDDWDDLDDDGWTEEDDEGV) are enriched in acidic residues.

The protein belongs to the TRAFAC class OBG-HflX-like GTPase superfamily. OBG GTPase family. In terms of assembly, monomer. The cofactor is Mg(2+).

It is found in the cytoplasm. Functionally, an essential GTPase which binds GTP, GDP and possibly (p)ppGpp with moderate affinity, with high nucleotide exchange rates and a fairly low GTP hydrolysis rate. Plays a role in control of the cell cycle, stress response, ribosome biogenesis and in those bacteria that undergo differentiation, in morphogenesis control. This Glaesserella parasuis serovar 5 (strain SH0165) (Haemophilus parasuis) protein is GTPase Obg.